Here is a 252-residue protein sequence, read N- to C-terminus: Protein lin-28 homolog B (252 aa).

Residues 1-30 form a disordered region; sequence MAEGGAARGTREEQGKLPEQEEEEEEDPQV. A compositionally biased stretch (basic and acidic residues) spans 9–19; the sequence is GTREEQGKLPE. The CSD domain maps to 32-105; the sequence is LGSGHCKWFN…GFESLRVTGP (74 aa). 2 CCHC-type zinc fingers span residues 130–147 and 152–169; these read DRCY…ECNL and KKCH…NCPH. Residues C132, C135, H140, C145, C154, C157, H162, and C167 each contribute to the Zn(2+) site. Positions 172–252 are disordered; it reads VPQHPTTSQG…KGPSVQKKKK (81 aa). Over residues 213–222 the composition is skewed to basic and acidic residues; the sequence is GRSELSERSS. Polar residues predominate over residues 225–238; it reads PQEASLSKISTSPE.

It belongs to the lin-28 family.

It localises to the nucleus. Its subcellular location is the nucleolus. Functionally, suppressor of specific microRNA (miRNA) biogenesis. Binds target primary miRNA transcripts and sequester them in the nucleolus, away from the microprocessor complex, hence preventing their processing into mature miRNA. The specific interaction with target pri-miRNAs occurs via an 5'-GGAG-3' motif in the pre-miRNA terminal loop. The polypeptide is Protein lin-28 homolog B (lin28b) (Xenopus laevis (African clawed frog)).